A 2449-amino-acid polypeptide reads, in one-letter code: MAKQGCIRVSVPFPLVYAPTTSDSTNLRASHQGRTTRLPLGSSLSEEYCLISWALLASLYHGSATVLLNGVLPSELGSPCEPCADAIVDMAPDSEIQSLERQMADFLQQIKHIPAESDAANDNPNVVLDFGERTASLLMQSVPSSHSATEESFPPIHDGEGLHLRIICQPSEPDISWFCEVVHDENLVDRDAAQRIAEQFAHIYKQLGSHSRGLQASINDLSLLNTADEHQLIEWNHDPPAIIDACFQDLFAIQVHSGPGRLAVSAWDGELTYGQLDELANQSAQRLLEQNVRPGMVVPLLFEKSKWMAVAMLAVAKVRATAVCICISHPMDLMKRILYQSNPAIILLSRAQEPLIRQIGEYPVLIIPEDLYSSPRSATAEQPVSTAFPSASSDDVAFIVFSSGSTGVPKGIVLSHRAIATAGHYVGDRLQVTSEARVLQFSSYAFDMSIIETWQALTRGACLCIPSETQRLNSMPEFIQQHRVTWAFFTPTTLRNFEPSDFPTLETLTLGGETIPVDLARHWESRVSIFNLWGPAEVGPAGAGPISPTSGWIPGTFGTAAGCISWITMPDDSDSLAPIGTVGEMIIEGAVVADGYLNDPTRTQQVFIEAPRWRERFTEIPVQCRFFRTGDLCHYNPDGTLRYVGRRDTVVKIRGQRVDVDAVELQLRQLDPHVDSVVSAVKFYDAAGAMTLVQFLVDRTGFEIDWSSQRPGESMTALESGSWALSHHYQSLLRPYLPQYMVPSLIIPVKSLPRTATDKVDRRRLCQCFQQFSSSQLMDWLGGNRSRCLAKADSLPMTPNEDVLVKVIASVCKISTSSIDLKASFPQLGGDSTTAIRLTRVLLAYNLLLHTERLLDIECSLRTVAKEARPTDAVTLADGPPPFSLIGVNDANAITCLRRVASQECKIQEEDIQDIYPTTPLQEGLLAVTEIHSGDAYVDRVLFSLPADCSVELAQQAWQNVVQATSILRTRIIQADDGRTYQIVVRPERKIQWQTASSESQFYEKDRARSMGLGSPLVRLTLIQDSEAREQPAKLAVTFHHSVYDAFTLHACIKQAEKAYTSETLFPSTFTGFINHLNQQKLADGERTRQFWLKEMVELQSNVFPALPSPQYLPHTSTSVVYEGCRANATSSKQISSPSAKVRLAWALLISLYTDSPDIVYGTVVDGRRGLGVILGSVLGPTIATLPVRTTIQRESTVEESLAQVQENMKRMIPFEHTGLQRIRNMGHGPATACKFQNLLVIQADDMIPDSPIFGPVEVSVGSINSFPGYALILQVAPSETSWKFEMLVDEAVVPREQAELMLSQLSHLLKQIDDCHTQNLTIAQLDLISDRDSELLSTCLKSIPTCLDSTIVDLVEAQVTRNPSKCAVSACDGDLSYAELQSSARQLAQLLLPLIVGQGIQFIPIFLERSYWVPISMLAVAKLGVAFVLLDPNQPHERNVKICRAISGTLGITSAQMQNLASTVCDGPWISLSTEALISHAQAVPSGTTTTMPPMPNPSPRDLLYAAFTSGSTGEPKAVLIEHASYASAVIAQQNKLEITSSSRVLQLSSYAFDSFAVEILTVLASGGCVCIPSESEIAEDLGHVVEKYRSNWLCITPSVLRLLTPDDVPSLRTVVAVGESMLPGQIKLWCSRVHLYCGYGPTECCTGAAVHRVTSTDADARLIGKGMGAVLWVVDKEDVTRRMPVNTVGELILQGPIVGRGYLNNPKKSTECFLQPPSWAPQFKDRQASRMYRTGDMVRRNLDGTFTFLGRTNQHTKLHGQRIDLAEIERHVLRFFGTDASGIAAILQPTKSDMPPCLVAMVHIPSLAAKVPDISDMNGFSNIAFQSHSHDFALRASRVQQKLRQSFPPVMVPELYLQLPSIPLTISGKVNRRSLLDEATELSPVDLHDLGGLSRNESRSTGLLDHTDEPVAWALSKHIGQLLQRKTGHEKMAAEIVGRNVGLSRVGLDSIDIIALSQFISRHYDCSISMTNLFDSTLTVRMVAEMIDRTPNSVPEKALLSPGWWERVQCMIRQINDLPVCQSSRRTIHSRPSGKRLFLTGATGFLGTHILHQLLVDNDVSIVYVLARAPCPRKGLARIIQAARLARWWRNDYRRLIQVWPGDLSQPHLGLADEHWETLSGTESSLNSSIGAVDAIIHCGAVIHWGYDYDTLEAANVRSTFDILQCLNRSPTPIALTYISALIPGDAALATTDTDNHPSMSNGHAVFPPIELTDGYTQTKFASEQLIGAFSARHKAHSLTIVRPGFMIGPVSNAVANGDDLLWRVVTTAMTTCSYNSDESDNWLFVAAVDWVASLIIHETLHARPSSHSVNDNANPLAPSAKAVSIGDGLNMSDFWKAIMLGLGRDLIPSSSQRWMDTVEQQVNEVGTSHPLWPLMGFLRASGGCLGVAPTDPLPVPIYQPPSLTNMIRQAVVRNAEYLASLEDLAASTMLFKRRNKVALGNGLINS.

The segment at 253–654 (IQVHSGPGRL…GRRDTVVKIR (402 aa)) is adenylation 1. The 76-residue stretch at 795–870 (LPMTPNEDVL…LRTVAKEARP (76 aa)) folds into the Carrier 1 domain. An O-(pantetheine 4'-phosphoryl)serine modification is found at Ser-815. A condensation 1 region spans residues 913 to 1337 (QDIYPTTPLQ…LISDRDSELL (425 aa)). Residues 1357–1756 (EAQVTRNPSK…TFTFLGRTNQ (400 aa)) form an adenylation 2 region. One can recognise a Carrier 2 domain in the interval 1915 to 1993 (WALSKHIGQL…MVAEMIDRTP (79 aa)). Ser-1952 is modified (O-(pantetheine 4'-phosphoryl)serine). The interval 2041-2297 (LTGATGFLGT…VAAVDWVASL (257 aa)) is reductase (R) domain. NADPH is bound by residues Thr-2045, Met-2249, and Asn-2259.

This sequence belongs to the NRP synthetase family.

It functions in the pathway alkaloid biosynthesis. Nonribisomal peptide synthetase; part of the gene cluster that mediates the biosynthesis of paraherquamide, a fungal indole alkaloid that belongs to a family of natural products containing a characteristic bicyclo[2.2.2]diazaoctane core. The first steps in the biosynthesis of paraherquamide is the production of the beta-methyl-proline precursor from L-isoleucine. They require oxidation of a terminally hydroxylated L-isoleucine to the corresponding aldehyde by enzymes which have still to be identified. Spontaneous cyclization and dehydration would yield the 4-methyl pyrolline-5-carboxylic acid, which is then reduced by the pyrroline-5-carboxylate reductase phqD leading to the beta-methyl-proline precursor. The next step of paraherquamide biosynthesis involves coupling of beta-methyl-proline and L-tryptophan by the bimodular NRPS phqB, to produce a monooxopiperazine intermediate. The reductase (R) domain of phqB utilizes NADPH for hydride transfer to reduce the thioester bond of the T domain-tethered linear dipeptide to a hemithioaminal intermediate, which spontaneously cleaves the C-S bond to release the aldehyde product. This compound undergoes spontaneous cyclization and dehydration to give a dienamine which is reverse prenylated at C-2 by the reverse prenyltransferase phqJ. The other prenyltransferase present in the cluster, phqI may be a redundant gene in the pathway. During biosynthetic assembly, the key step to produce the polycyclic core is catalyzed by the bifunctional reductase and intramolecular [4+2] Diels-Alderase, phqE, resulting in formation of the [2.2.2] diazaoctane intermediate preparaherquamide. Following formation of preparaherquamide, an indole 2,3-epoxidation-initiated pinacol-like rearrangement is catalyzed by the phqK FAD-dependent monooxygenase. The prenyltransferase phqA, the cytochrome P450 monooxygenase phqL, and the FAD-linked oxidoreductase phqH (or the cytochrome P450 monooxygenase phqM), are proposed to be involved in the formation of the pyran ring. The FAD-dependent monooxygenase phqK is likely responsible for generation of the spiro-oxindole, and the N-methylation is likely mediated by the phqN methyltransferase leading to the isolable natural product paraherquamide F. However, the order of these biosynthetic steps has still to be determined. In late-stage paraherquamide biosynthesis, the third P450 monooxygenase, phqO, is probably responsible for the C-14 hydroxylation, transforming paraherquamide F to paraherquamide G, and paraherquamide E to the final product paraherquamide A. The expansion from the 6-membered ring pyran (in paraherquamides F and G) to the 7-membered dioxepin ring (in paraherquamides A and E) represents a poorly understood but intriguing process that probably involves the 2-oxoglutarate-dependent dioxygenase phqC. Finally, the remaining members of the paraherquamide cluster, including phqI as well as phqM (or phqH), do not have a clearly prescribed role and appear to be redundant. The polypeptide is Nonribisomal peptide synthetase phqB (Penicillium fellutanum).